Reading from the N-terminus, the 354-residue chain is Nicotinate-nucleotide--dimethylbenzimidazole phosphoribosyltransferase (354 aa).

Glutamate 322 acts as the Proton acceptor in catalysis.

Belongs to the CobT family.

The enzyme catalyses 5,6-dimethylbenzimidazole + nicotinate beta-D-ribonucleotide = alpha-ribazole 5'-phosphate + nicotinate + H(+). Its pathway is nucleoside biosynthesis; alpha-ribazole biosynthesis; alpha-ribazole from 5,6-dimethylbenzimidazole: step 1/2. Catalyzes the synthesis of alpha-ribazole-5'-phosphate from nicotinate mononucleotide (NAMN) and 5,6-dimethylbenzimidazole (DMB). This is Nicotinate-nucleotide--dimethylbenzimidazole phosphoribosyltransferase from Solidesulfovibrio magneticus (strain ATCC 700980 / DSM 13731 / RS-1) (Desulfovibrio magneticus).